Reading from the N-terminus, the 172-residue chain is Adenine phosphoribosyltransferase (172 aa).

The protein belongs to the purine/pyrimidine phosphoribosyltransferase family. As to quaternary structure, homodimer.

It localises to the cytoplasm. It carries out the reaction AMP + diphosphate = 5-phospho-alpha-D-ribose 1-diphosphate + adenine. The protein operates within purine metabolism; AMP biosynthesis via salvage pathway; AMP from adenine: step 1/1. In terms of biological role, catalyzes a salvage reaction resulting in the formation of AMP, that is energically less costly than de novo synthesis. The protein is Adenine phosphoribosyltransferase of Clostridium kluyveri (strain NBRC 12016).